The following is a 316-amino-acid chain: Ornithine carbamoyltransferase (316 aa).

Residues 57-60 (STRT), Q84, R108, and 135-138 (HPCQ) each bind carbamoyl phosphate. Residues N166, D230, and 234 to 235 (SM) each bind L-ornithine. Carbamoyl phosphate-binding positions include 269–270 (CL) and R297.

It belongs to the aspartate/ornithine carbamoyltransferase superfamily. OTCase family.

The protein resides in the cytoplasm. It carries out the reaction carbamoyl phosphate + L-ornithine = L-citrulline + phosphate + H(+). It functions in the pathway amino-acid biosynthesis; L-arginine biosynthesis; L-arginine from L-ornithine and carbamoyl phosphate: step 1/3. Reversibly catalyzes the transfer of the carbamoyl group from carbamoyl phosphate (CP) to the N(epsilon) atom of ornithine (ORN) to produce L-citrulline. This Bacillus cereus (strain ATCC 14579 / DSM 31 / CCUG 7414 / JCM 2152 / NBRC 15305 / NCIMB 9373 / NCTC 2599 / NRRL B-3711) protein is Ornithine carbamoyltransferase (argF).